Consider the following 397-residue polypeptide: Argininosuccinate synthase (397 aa).

Residue 9 to 17 (AYSGGLDTT) participates in ATP binding. Tyrosine 87 serves as a coordination point for L-citrulline. An ATP-binding site is contributed by glycine 117. The L-aspartate site is built by threonine 119, asparagine 123, and aspartate 124. Asparagine 123 is a binding site for L-citrulline. L-citrulline-binding residues include arginine 127, serine 174, serine 183, glutamate 259, and tyrosine 271.

The protein belongs to the argininosuccinate synthase family. Type 1 subfamily. Homotetramer.

It is found in the cytoplasm. The enzyme catalyses L-citrulline + L-aspartate + ATP = 2-(N(omega)-L-arginino)succinate + AMP + diphosphate + H(+). It participates in amino-acid biosynthesis; L-arginine biosynthesis; L-arginine from L-ornithine and carbamoyl phosphate: step 2/3. In Pyrobaculum aerophilum (strain ATCC 51768 / DSM 7523 / JCM 9630 / CIP 104966 / NBRC 100827 / IM2), this protein is Argininosuccinate synthase.